A 105-amino-acid polypeptide reads, in one-letter code: Ig lambda-1 chain C region (105 aa).

One can recognise an Ig-like domain in the interval 6-100 (PSVTLFPPSS…EGHTVEKSLS (95 aa)). A disulfide bridge links C27 with C86.

The chain is Ig lambda-1 chain C region from Mus musculus (Mouse).